The following is a 689-amino-acid chain: Glycine--tRNA ligase beta subunit (689 aa).

It belongs to the class-II aminoacyl-tRNA synthetase family. In terms of assembly, tetramer of two alpha and two beta subunits.

Its subcellular location is the cytoplasm. It catalyses the reaction tRNA(Gly) + glycine + ATP = glycyl-tRNA(Gly) + AMP + diphosphate. The polypeptide is Glycine--tRNA ligase beta subunit (Dictyoglomus thermophilum (strain ATCC 35947 / DSM 3960 / H-6-12)).